A 1444-amino-acid polypeptide reads, in one-letter code: Rho GTPase-activating protein 31 (1444 aa).

The 196-residue stretch at 21–216 folds into the Rho-GAP domain; that stretch reads CDLTEYLESS…FILNHVDQIF (196 aa). At S272 the chain carries Phosphoserine. The residue at position 286 (T286) is a Phosphothreonine. Phosphoserine occurs at positions 346, 349, and 387. The interval 398 to 427 is disordered; the sequence is WGQEGMPPGAEGGFDVSSDRSHLQGAQARP. The residue at position 476 (S476) is a Phosphoserine. The interval 504–631 is disordered; sequence TNSTPCRTPP…ESSTLQESPR (128 aa). The segment covering 515–534 has biased composition (low complexity); that stretch reads ELQSLSSLEEFSFHGSESGG. Over residues 600-619 the composition is skewed to basic and acidic residues; the sequence is NELEKRPNPEKVVEEGREAG. T679 is subject to Phosphothreonine. 2 disordered regions span residues 688–893 and 906–1108; these read SSLG…EDDT and EPWE…SSLN. Phosphoserine occurs at positions 701 and 712. A compositionally biased stretch (polar residues) spans 722–734; that stretch reads PANQSTQGASTAA. Basic and acidic residues predominate over residues 735–745; that stretch reads SREKPEPEQGL. Over residues 777–790 the composition is skewed to pro residues; it reads LSPPLPPAPPPPTP. Phosphoserine is present on S778. Position 789 is a phosphothreonine (T789). Positions 803–817 are enriched in basic and acidic residues; it reads GPEREDSSRKLRTDL. Residues 822–834 are compositionally biased toward polar residues; the sequence is LKSQDSPEISSLC. Over residues 839–848 the composition is skewed to basic and acidic residues; sequence ATPRHSDKQN. Residues 960 to 977 are compositionally biased toward polar residues; it reads TVKSQWTLEVPSSSSCAN. S974 bears the Phosphoserine mark. A compositionally biased stretch (basic and acidic residues) spans 992–1008; the sequence is PRREITGWDEKALRSFR. Residues 1028-1038 show a composition bias toward polar residues; sequence VQPNPAETSPI. Over residues 1064-1075 the composition is skewed to low complexity; the sequence is GPESSKESSPSV. 3 positions are modified to phosphoserine: S1105, S1106, and S1178. Polar residues-rich tracts occupy residues 1211–1224 and 1234–1245; these read QIPQ…SGEN and EGPSSTSGTTQK. The disordered stretch occupies residues 1211–1346; it reads QIPQPLPSQS…HRSRPGRPQS (136 aa). Over residues 1246-1265 the composition is skewed to basic and acidic residues; that stretch reads PAKDDSPSSLESSKEEKPKQ. Composition is skewed to polar residues over residues 1292–1303 and 1314–1323; these read PGSSNLLSTQDA and TEPSGDNLLS.

Interacts with ITSN1, which inhibits GAP activity. Interacts with PARVA. Interacts with GTP-loaded RHOU. In terms of processing, phosphorylation on Thr-789 reduces GAP activity.

The protein resides in the cell projection. Its subcellular location is the lamellipodium. It is found in the cell junction. The protein localises to the focal adhesion. Its function is as follows. Functions as a GTPase-activating protein (GAP) for RAC1 and CDC42. Required for cell spreading, polarized lamellipodia formation and cell migration. The sequence is that of Rho GTPase-activating protein 31 (ARHGAP31) from Homo sapiens (Human).